Here is a 145-residue protein sequence, read N- to C-terminus: Anaerobic nitrite reductase NSHB5 (145 aa).

Positions 2–142 (GFSETQEELV…LAAAIKEEMK (141 aa)) constitute a Globin domain. The Homodimerization signature appears at 35-39 (EIAPA). Positions 45, 59, 61, 84, 88, and 89 each coordinate heme b. Residues 96–108 (DAYFEVVKTALLD) carry the Homodimerization motif.

The protein belongs to the plant globin family. In terms of assembly, homodimer. Heme b is required as a cofactor. Expressed in embryonic (embryos, coleoptiles and seminal roots) and vegetative (leaves and roots) organs.

It is found in the cytoplasm. The protein localises to the nucleus. The enzyme catalyses Fe(III)-heme b-[protein] + nitric oxide + H2O = Fe(II)-heme b-[protein] + nitrite + 2 H(+). In terms of biological role, phytoglobin that reduces nitrite to nitric oxide under anoxic conditions (e.g. during flooding or in waterlogged soil). May not function as an oxygen storage or transport protein. Has an unusually high affinity for O(2) through an hexacoordinate heme iron because of a very low dissociation constant. This chain is Anaerobic nitrite reductase NSHB5, found in Oryza sativa subsp. japonica (Rice).